Reading from the N-terminus, the 841-residue chain is Phosphatidylglycerol lysyltransferase (841 aa).

Topologically, residues 1 to 8 are cytoplasmic; the sequence is MTKELRSK. A helical transmembrane segment spans residues 9–29; it reads LFTILKIAFALTLFTIVAITL. Residues 30 to 52 are Extracellular-facing; the sequence is YKELSHINLKDAIKSFSKINRFW. A helical transmembrane segment spans residues 53 to 73; sequence LVALFLSGGASIIVLSIYDVI. The Cytoplasmic segment spans residues 74-89; that stretch reads LAKTLKLKIGLAKTIR. A helical transmembrane segment spans residues 90-110; that stretch reads IGYIVNALNAVVGFGGFIGAS. Topologically, residues 111–129 are extracellular; it reads VRFLFYKNTTDDKKALFHT. A helical transmembrane segment spans residues 130–150; sequence ISIVLISMLTGLSLLSILVVI. At 151 to 164 the chain is on the cytoplasmic side; it reads HVFDISHIFTPYPW. The chain crosses the membrane as a helical span at residues 165–185; the sequence is VKWLMYVVALFLPIFVVFTII. Topologically, residues 186–193 are extracellular; the sequence is KPVQKTHR. The helical transmembrane segment at 194–216 threads the bilayer; it reads LLGVYCTIVSGVEWFVAALVLYM. The Cytoplasmic portion of the chain corresponds to 217–229; the sequence is SMAIVGVQIPFAT. A helical transmembrane segment spans residues 230-250; the sequence is FMGIFILAALSGLISFIPGGF. Residues 251-270 are Extracellular-facing; the sequence is GTFDLVVLLGLKALNVNEEA. The chain crosses the membrane as a helical span at residues 271 to 291; sequence IVLGLSLYRFAYYLFPVLIAL. The Cytoplasmic segment spans residues 292-336; the sequence is ILSTFEFRSTAKRYWEDSRILVPVKDMTSLLGSYQKDIIARIPSF. A helical transmembrane segment spans residues 337-357; that stretch reads AIALLLLFTSLVFFLNNLTII. The Extracellular segment spans residues 358–367; that stretch reads YDGLYDPNHY. A helical transmembrane segment spans residues 368–388; that stretch reads IYYIIVSIHTCACLLLLLNVI. Residues 389 to 392 lie on the Cytoplasmic side of the membrane; the sequence is GVYK. The helical transmembrane segment at 393-413 threads the bilayer; it reads LSKRAILFSIISVLFIFIATA. At 414-415 the chain is on the extracellular side; sequence YT. A helical transmembrane segment spans residues 416–436; that stretch reads YASFILLSWLTVIFILLLVFY. Over 437–448 the chain is Cytoplasmic; the sequence is RRARVIKRPFRY. Residues 449 to 469 form a helical membrane-spanning segment; sequence SKLLLSVITGAIILYINHLVI. The Extracellular segment spans residues 470–489; it reads KSTFYSLEIYHIEMLTSILR. Residues 490-510 traverse the membrane as a helical segment; the sequence is YYFWITILLVAIIVGVIVWWF. Topologically, residues 511–841 are cytoplasmic; the sequence is EYRYRSSNSR…KVMRVIRKNN (331 aa).

Belongs to the LPG synthase family.

It localises to the cell membrane. The enzyme catalyses L-lysyl-tRNA(Lys) + a 1,2-diacyl-sn-glycero-3-phospho-(1'-sn-glycerol) = a 1,2-diacyl-sn-glycero-3-phospho-1'-(3'-O-L-lysyl)-sn-glycerol + tRNA(Lys). Functionally, catalyzes the transfer of a lysyl group from L-lysyl-tRNA(Lys) to membrane-bound phosphatidylglycerol (PG), which produces lysylphosphatidylglycerol (LPG), a major component of the bacterial membrane with a positive net charge. LPG synthesis contributes to bacterial virulence as it is involved in the resistance mechanism against cationic antimicrobial peptides (CAMP) produces by the host's immune system (defensins, cathelicidins) and by the competing microorganisms (bacteriocins). In fact, the modification of anionic phosphatidylglycerol with positively charged L-lysine results in repulsion of the peptides. In Staphylococcus xylosus, this protein is Phosphatidylglycerol lysyltransferase (mprF).